A 25-amino-acid polypeptide reads, in one-letter code: Endoglucanase 1 (25 aa).

A disordered region spans residues 1–25 (YDASLKPNLQIPQKNIPNNDAVNIK). A compositionally biased stretch (polar residues) spans 10–25 (QIPQKNIPNNDAVNIK).

The catalysed reaction is Endohydrolysis of (1-&gt;4)-beta-D-glucosidic linkages in cellulose, lichenin and cereal beta-D-glucans.. Functionally, this enzyme hydrolyzes cellotetraose, cellopentaose, and cellohexaose to cellobiose and cellotriose but does not hydrolyze cellobiose or cellotriose. This chain is Endoglucanase 1, found in Ruminiclostridium josui (Clostridium josui).